A 207-amino-acid polypeptide reads, in one-letter code: MLQLTEKFKGTTTVGIVCSDGVVLAADRRASLGNIVYAKNVTKIHKIDEHLAIAGAGDVGDILNLVRLLRAEAKLYYAQSGKRMSVKALATLLANMLNGARMLPYLAWFLVGGFDEKPRLYSVDMMGGITEDKYVAAGSGMEFAYSVLDSEYREDLKVREGIKIAVEAINSAIKRDVFSGDGIMVVTITEEGYRELSNSRLKAILRQ.

The propeptide at Met1–Gly10 is removed in mature form; by autocatalysis. Residue Thr11 is the Nucleophile of the active site.

It belongs to the peptidase T1B family. The 20S proteasome core is composed of 14 alpha and 14 beta subunits that assemble into four stacked heptameric rings, resulting in a barrel-shaped structure. The two inner rings, each composed of seven catalytic beta subunits, are sandwiched by two outer rings, each composed of seven alpha subunits. The catalytic chamber with the active sites is on the inside of the barrel. Has a gated structure, the ends of the cylinder being occluded by the N-termini of the alpha-subunits. Is capped at one or both ends by the proteasome regulatory ATPase, PAN.

Its subcellular location is the cytoplasm. The catalysed reaction is Cleavage of peptide bonds with very broad specificity.. With respect to regulation, the formation of the proteasomal ATPase PAN-20S proteasome complex, via the docking of the C-termini of PAN into the intersubunit pockets in the alpha-rings, triggers opening of the gate for substrate entry. Interconversion between the open-gate and close-gate conformations leads to a dynamic regulation of the 20S proteasome proteolysis activity. Its function is as follows. Component of the proteasome core, a large protease complex with broad specificity involved in protein degradation. In Pyrococcus abyssi (strain GE5 / Orsay), this protein is Proteasome subunit beta 2.